Here is a 209-residue protein sequence, read N- to C-terminus: Uracil phosphoribosyltransferase (209 aa).

5-phospho-alpha-D-ribose 1-diphosphate is bound by residues Arg79, Arg104, and 131–139; that span reads DPMLATGGS. Uracil is bound by residues Ile194 and 199 to 201; that span reads GDA. A 5-phospho-alpha-D-ribose 1-diphosphate-binding site is contributed by Asp200.

Belongs to the UPRTase family. It depends on Mg(2+) as a cofactor.

It catalyses the reaction UMP + diphosphate = 5-phospho-alpha-D-ribose 1-diphosphate + uracil. The protein operates within pyrimidine metabolism; UMP biosynthesis via salvage pathway; UMP from uracil: step 1/1. Allosterically activated by GTP. Its function is as follows. Catalyzes the conversion of uracil and 5-phospho-alpha-D-ribose 1-diphosphate (PRPP) to UMP and diphosphate. This chain is Uracil phosphoribosyltransferase, found in Lacticaseibacillus paracasei (strain ATCC 334 / BCRC 17002 / CCUG 31169 / CIP 107868 / KCTC 3260 / NRRL B-441) (Lactobacillus paracasei).